The primary structure comprises 23 residues: Potassium channel toxin alpha-KTx 13.1 (23 aa).

3 cysteine pairs are disulfide-bonded: C2/C15, C5/C20, and C9/C22. Positions 13–20 (GKCINGRC) are interaction with Ca(2+)-activated K(+) channels.

As to expression, expressed by the venom gland.

It localises to the secreted. Functionally, blocks reversibly Shaker B potassium channels. Also displaces binding of noxiustoxin to mouse brain synaptosome membranes. This is Potassium channel toxin alpha-KTx 13.1 from Tityus obscurus (Amazonian scorpion).